The primary structure comprises 248 residues: uncharacterized protein (248 aa).

This is an uncharacterized protein from Streptococcus pyogenes serotype M6 (strain ATCC BAA-946 / MGAS10394).